The primary structure comprises 216 residues: Somatotropin (216 aa).

Positions 1 to 25 are cleaved as a signal peptide; sequence MAPGSWFSPLLIAVVTLGLPQGAAA. Residue His45 participates in Zn(2+) binding. Cysteines 78 and 189 form a disulfide. Glu198 is a binding site for Zn(2+). An intrachain disulfide couples Cys206 to Cys214.

The protein belongs to the somatotropin/prolactin family. As to expression, pituitary gland.

The protein resides in the secreted. Its function is as follows. Growth hormone plays an important role in growth control. This Meleagris gallopavo (Wild turkey) protein is Somatotropin (GH).